A 36-amino-acid chain; its full sequence is KVVHLRPRSSFSSEDEYQIYLRNVSKYIQLYGRPRF.

Phe36 carries the post-translational modification Phenylalanine amide.

Belongs to the NPY family. In terms of tissue distribution, central and peripheral nervous system, and muscular pharynx.

The protein localises to the secreted. In terms of biological role, may perform an important neurotransmitter function and may regulate muscular activity. This chain is Neuropeptide F, found in Arthurdendyus triangulatus (New Zealand flatworm).